A 504-amino-acid polypeptide reads, in one-letter code: Cobyric acid synthase (504 aa).

Residues 251–448 (DITIAIVQLP…LHGLFDSDAF (198 aa)) enclose the GATase cobBQ-type domain. Cys-332 (nucleophile) is an active-site residue. Residue His-440 is part of the active site.

It belongs to the CobB/CobQ family. CobQ subfamily.

The protein operates within cofactor biosynthesis; adenosylcobalamin biosynthesis. Functionally, catalyzes amidations at positions B, D, E, and G on adenosylcobyrinic A,C-diamide. NH(2) groups are provided by glutamine, and one molecule of ATP is hydrogenolyzed for each amidation. In Salmonella gallinarum (strain 287/91 / NCTC 13346), this protein is Cobyric acid synthase.